A 447-amino-acid polypeptide reads, in one-letter code: NADH peroxidase (447 aa).

Residues 7–11, E32, C42, 110–113, and R132 contribute to the FAD site; these read GSSHG and SPGA. The active-site Proton acceptor is the H10. The Redox-active role is filled by C42. C42 bears the Cysteine sulfenic acid (-SOH) mark. NAD(+) contacts are provided by I160, D179, Y188, and G243. Residue D281 coordinates FAD. A297 is an NAD(+) binding site. A299 provides a ligand contact to FAD. G328 is a binding site for NAD(+).

It belongs to the class-III pyridine nucleotide-disulfide oxidoreductase family. In terms of assembly, homotetramer. The cofactor is FAD.

The enzyme catalyses H2O2 + NADH + H(+) = NAD(+) + 2 H2O. In terms of biological role, peroxidase whose active site is a redox-active cysteine-sulfenic acid. The polypeptide is NADH peroxidase (npr) (Enterococcus faecalis (strain ATCC 700802 / V583)).